A 146-amino-acid polypeptide reads, in one-letter code: Urease accessory protein UreE 1 (146 aa).

This sequence belongs to the UreE family.

It is found in the cytoplasm. In terms of biological role, involved in urease metallocenter assembly. Binds nickel. Probably functions as a nickel donor during metallocenter assembly. The polypeptide is Urease accessory protein UreE 1 (Pseudomonas syringae pv. tomato (strain ATCC BAA-871 / DC3000)).